The primary structure comprises 362 residues: Transcription factor bHLH133 (362 aa).

In terms of domain architecture, bHLH spans 209–258; it reads LQVPSSQSTLKVRKEKLGGRIASLHQLVSPFGKTDTASVLSEAIGYIRFL.

The protein belongs to the bHLH protein family. As to quaternary structure, homodimer.

Its subcellular location is the nucleus. The protein is Transcription factor bHLH133 (BHLH133) of Arabidopsis thaliana (Mouse-ear cress).